We begin with the raw amino-acid sequence, 76 residues long: UPF0729 protein C18orf32 (76 aa).

Positions 1–37 (MVCIPCIVIPVLLWIYKKFLEPYIYPLVSPFVSRIWP) are necessary for its localzation to the endoplasmic reticulum and lipid droplets. Positions 46–76 (DTNKGKVNFKGADMNGLPTKGPTEICDKKKD) are disordered.

The protein belongs to the UPF0729 family. As to quaternary structure, interacts with DERL1 and AMFR. Undergoes ER-associated degradation (ERAD).

It is found in the endoplasmic reticulum. Its subcellular location is the lipid droplet. In terms of biological role, may activate the NF-kappa-B signaling pathway. This Homo sapiens (Human) protein is UPF0729 protein C18orf32 (C18orf32).